We begin with the raw amino-acid sequence, 456 residues long: Equilibrative nucleoside transporter 1 (456 aa).

Residues 2–12 lie on the Cytoplasmic side of the membrane; it reads TTSHQPQDRYK. The helical transmembrane segment at 13–29 threads the bilayer; it reads AVWLIFFMLGLGTLLPW. Residues 30–82 lie on the Extracellular side of the membrane; it reads NFFMTATQYFTNRLDMSQNVSLVTAELSKDAQASAAPAAPLPERNSLSAIFNN. N-linked (GlcNAc...) asparagine glycosylation is present at Asn-48. Residues 83–107 form a helical membrane-spanning segment; sequence VMTLCAMLPLLLFTYLNSFLHQRIP. Residues 108–111 lie on the Cytoplasmic side of the membrane; the sequence is QSVR. The chain crosses the membrane as a helical span at residues 112–130; it reads ILGSLVAILLVFLITAILV. Over 131 to 138 the chain is Extracellular; the sequence is KVQLDALP. A helical transmembrane segment spans residues 139–157; sequence FFVITMIKIVLINSFGAIL. The Cytoplasmic portion of the chain corresponds to 158–174; that stretch reads QGSLFGLAGLLPASYTA. A helical transmembrane segment spans residues 175 to 199; sequence PIMSGQGLAGFFASVAMICAIASGS. The Extracellular segment spans residues 200 to 206; that stretch reads ELSESAF. A helical transmembrane segment spans residues 207–227; the sequence is GYFITACAVIILTIICYLGLP. The Cytoplasmic segment spans residues 228 to 291; it reads RLEFYRYYQQ…IKAILKNISV (64 aa). Phosphoserine is present on residues Ser-254, Ser-269, and Ser-273. Residues 254-266 are compositionally biased toward basic and acidic residues; sequence SKGEEPRAGKEES. Residues 254–276 form a disordered region; sequence SKGEEPRAGKEESGVSVSNSQPT. A helical transmembrane segment spans residues 292–311; that stretch reads LAFSVCFIFTITIGMFPAVT. The Extracellular portion of the chain corresponds to 312–323; sequence VEVKSSIAGSST. The helical transmembrane segment at 324–342 threads the bilayer; the sequence is WERYFIPVSCFLTFNIFDW. Residues 343–359 lie on the Cytoplasmic side of the membrane; it reads LGRSLTAVFMWPGKDSR. The helical transmembrane segment at 360–378 threads the bilayer; the sequence is WLPSLVLARLVFVPLLLLC. The Extracellular segment spans residues 379–393; it reads NIKPRRYLTVVFEHD. The chain crosses the membrane as a helical span at residues 394–413; sequence AWFIFFMAAFAFSNGYLASL. Topologically, residues 414–431 are cytoplasmic; it reads CMCFGPKKVKPAEAETAG. The helical transmembrane segment at 432 to 452 threads the bilayer; it reads AIMAFFLCLGLALGAVFSFLF. At 453–456 the chain is on the extracellular side; sequence RAIV.

The protein belongs to the SLC29A/ENT transporter (TC 2.A.57) family. In terms of assembly, identified in a complex with STOM. Glycosylated. Expressed in testis at the blood-testis barrier (at protein level). Detected in erythrocytes (at protein level). Expressed at relatively high levels in cerebral cortex, particularly the frontal and parietal lobes, and the thalamus and basal ganglia (at protein level). In the midbrain expressed at moderate levels, whereas in the other areas of the brainstem, namely medulla and pons, cerebellum and the hippocampus expressed at lower amounts when compared to the other brain regions (at protein level). Expressed in Langerhans cells and lymphocytes in the pancreas (at protein level). Expressed in kidney, in polarized renal epithelial cells. Expressed in adipose tissues. Expressed in placenta. Expressed in small intestine.

It is found in the basolateral cell membrane. The protein localises to the apical cell membrane. It localises to the cell membrane. The catalysed reaction is adenosine(in) = adenosine(out). It carries out the reaction guanosine(in) = guanosine(out). The enzyme catalyses inosine(in) = inosine(out). It catalyses the reaction uridine(out) = uridine(in). The catalysed reaction is thymidine(in) = thymidine(out). It carries out the reaction cytidine(in) = cytidine(out). The enzyme catalyses adenine(out) = adenine(in). It catalyses the reaction guanine(out) = guanine(in). The catalysed reaction is thymine(out) = thymine(in). It carries out the reaction uracil(in) = uracil(out). The enzyme catalyses hypoxanthine(out) = hypoxanthine(in). Transporter activity is sensitive to low concentrations of the inhibitor nitrobenzylmercaptopurine riboside (NBMPR). Inhibited by dilazep. Inhibited by dipyridamole. Inhibited by hypoxanthine. Inhibited by azidothymidine (AZT). Inhibited by dideoxycytidine (ddC). Inhibited by dideoxyinosine (ddI). Inhibited by draflazine. Inhibited by soluflazine. Inhibited by cladribine. Inhibited by capecitabine. Inhibited by clofarabine. Inhibited by ribavirin. Modestly inhibited by acyclovir. Modestly inhibited by 5-fluorouracil. Its function is as follows. Uniporter involved in the facilitative transport of nucleosides and nucleobases, and contributes to maintaining their cellular homeostasis. Functions as a Na(+)-independent transporter. Involved in the transport of nucleosides such as adenosine, guanosine, inosine, uridine, thymidine and cytidine. Also transports purine nucleobases (hypoxanthine, adenine, guanine) and pyrimidine nucleobases (thymine, uracil). Mediates basolateral nucleoside uptake into Sertoli cells, thereby regulating the transport of nucleosides in testis across the blood-testis barrier. Regulates inosine levels in brown adipocytes tissues (BAT) and extracellular inosine levels, which controls BAT-dependent energy expenditure. This is Equilibrative nucleoside transporter 1 from Homo sapiens (Human).